The following is a 155-amino-acid chain: Large ribosomal subunit protein bL9c (155 aa).

This sequence belongs to the bacterial ribosomal protein bL9 family.

Its subcellular location is the plastid. It is found in the chloroplast. Binds to the 23S rRNA. The sequence is that of Large ribosomal subunit protein bL9c from Porphyra purpurea (Red seaweed).